A 191-amino-acid polypeptide reads, in one-letter code: Peptidyl-tRNA hydrolase (191 aa).

Y17 serves as a coordination point for tRNA. H22 functions as the Proton acceptor in the catalytic mechanism. Positions 68, 70, and 116 each coordinate tRNA.

The protein belongs to the PTH family. Monomer.

It localises to the cytoplasm. It catalyses the reaction an N-acyl-L-alpha-aminoacyl-tRNA + H2O = an N-acyl-L-amino acid + a tRNA + H(+). Hydrolyzes ribosome-free peptidyl-tRNAs (with 1 or more amino acids incorporated), which drop off the ribosome during protein synthesis, or as a result of ribosome stalling. Functionally, catalyzes the release of premature peptidyl moieties from peptidyl-tRNA molecules trapped in stalled 50S ribosomal subunits, and thus maintains levels of free tRNAs and 50S ribosomes. This chain is Peptidyl-tRNA hydrolase, found in Mycobacterium avium (strain 104).